We begin with the raw amino-acid sequence, 315 residues long: Mycothiol acetyltransferase (315 aa).

N-acetyltransferase domains follow at residues 4–141 (LDWR…RPLR) and 152–315 (VVIR…GTDN). Position 36 (glutamate 36) interacts with 1D-myo-inositol 2-(L-cysteinylamino)-2-deoxy-alpha-D-glucopyranoside. Acetyl-CoA is bound by residues 80–82 (LVV) and 88–93 (RRGIGT). 1D-myo-inositol 2-(L-cysteinylamino)-2-deoxy-alpha-D-glucopyranoside contacts are provided by glutamate 179, lysine 224, and glutamate 234. Acetyl-CoA is bound by residues 238–240 (LGV) and 245–251 (QRRGLGQ). Tyrosine 282 lines the 1D-myo-inositol 2-(L-cysteinylamino)-2-deoxy-alpha-D-glucopyranoside pocket. 287-292 (NVAAVR) provides a ligand contact to acetyl-CoA.

Belongs to the acetyltransferase family. MshD subfamily. As to quaternary structure, monomer.

The enzyme catalyses 1D-myo-inositol 2-(L-cysteinylamino)-2-deoxy-alpha-D-glucopyranoside + acetyl-CoA = mycothiol + CoA + H(+). Catalyzes the transfer of acetyl from acetyl-CoA to desacetylmycothiol (Cys-GlcN-Ins) to form mycothiol. This chain is Mycothiol acetyltransferase, found in Mycobacterium bovis (strain ATCC BAA-935 / AF2122/97).